Reading from the N-terminus, the 433-residue chain is 3-phosphoshikimate 1-carboxyvinyltransferase (433 aa).

Lys23, Ser24, and Arg28 together coordinate 3-phosphoshikimate. Lys23 is a binding site for phosphoenolpyruvate. Residues Gly93 and Arg121 each contribute to the phosphoenolpyruvate site. 3-phosphoshikimate contacts are provided by Ser167, Gln169, Asp318, and Lys345. Gln169 serves as a coordination point for phosphoenolpyruvate. The active-site Proton acceptor is Asp318. Phosphoenolpyruvate-binding residues include Arg349 and Arg390.

The protein belongs to the EPSP synthase family. In terms of assembly, monomer.

The protein resides in the cytoplasm. It carries out the reaction 3-phosphoshikimate + phosphoenolpyruvate = 5-O-(1-carboxyvinyl)-3-phosphoshikimate + phosphate. The protein operates within metabolic intermediate biosynthesis; chorismate biosynthesis; chorismate from D-erythrose 4-phosphate and phosphoenolpyruvate: step 6/7. Its function is as follows. Catalyzes the transfer of the enolpyruvyl moiety of phosphoenolpyruvate (PEP) to the 5-hydroxyl of shikimate-3-phosphate (S3P) to produce enolpyruvyl shikimate-3-phosphate and inorganic phosphate. The sequence is that of 3-phosphoshikimate 1-carboxyvinyltransferase from Nitratiruptor sp. (strain SB155-2).